The sequence spans 592 residues: V-type ATP synthase alpha chain (592 aa).

233 to 240 (GPFGSGKT) is an ATP binding site.

The protein belongs to the ATPase alpha/beta chains family.

It carries out the reaction ATP + H2O + 4 H(+)(in) = ADP + phosphate + 5 H(+)(out). Its function is as follows. Produces ATP from ADP in the presence of a proton gradient across the membrane. The V-type alpha chain is a catalytic subunit. The polypeptide is V-type ATP synthase alpha chain (Clostridium botulinum (strain Loch Maree / Type A3)).